We begin with the raw amino-acid sequence, 268 residues long: Octanoyltransferase (268 aa).

The region spanning 49 to 237 (GTQGDVILVV…ALLKALSGEL (189 aa)) is the BPL/LPL catalytic domain. Substrate-binding positions include 87-94 (RGGRITWH), 167-169 (ALG), and 180-182 (GLA). Cys198 acts as the Acyl-thioester intermediate in catalysis.

It belongs to the LipB family.

It is found in the cytoplasm. It catalyses the reaction octanoyl-[ACP] + L-lysyl-[protein] = N(6)-octanoyl-L-lysyl-[protein] + holo-[ACP] + H(+). The protein operates within protein modification; protein lipoylation via endogenous pathway; protein N(6)-(lipoyl)lysine from octanoyl-[acyl-carrier-protein]: step 1/2. Functionally, catalyzes the transfer of endogenously produced octanoic acid from octanoyl-acyl-carrier-protein onto the lipoyl domains of lipoate-dependent enzymes. Lipoyl-ACP can also act as a substrate although octanoyl-ACP is likely to be the physiological substrate. This chain is Octanoyltransferase, found in Corynebacterium aurimucosum (strain ATCC 700975 / DSM 44827 / CIP 107346 / CN-1) (Corynebacterium nigricans).